Reading from the N-terminus, the 156-residue chain is Small ribosomal subunit protein uS7 (156 aa).

It belongs to the universal ribosomal protein uS7 family. As to quaternary structure, part of the 30S ribosomal subunit. Contacts proteins S9 and S11.

Its function is as follows. One of the primary rRNA binding proteins, it binds directly to 16S rRNA where it nucleates assembly of the head domain of the 30S subunit. Is located at the subunit interface close to the decoding center, probably blocks exit of the E-site tRNA. The sequence is that of Small ribosomal subunit protein uS7 from Parvibaculum lavamentivorans (strain DS-1 / DSM 13023 / NCIMB 13966).